We begin with the raw amino-acid sequence, 145 residues long: MAGGEPQSLEEAFAARRNVLAARRARERLRRLIASKSRHRFLRYLSWRFWKFERRDYWRKPKGNDNKMRLQLKGYPPIVKVGYRTPKAIRGMHPSGLEPVIVSSAKDLERLSPERHIVYIASGVGLRKKQEIRRAALERGFRVAN.

Belongs to the eukaryotic ribosomal protein eL32 family.

This is Large ribosomal subunit protein eL32 (rpl32e) from Aeropyrum pernix (strain ATCC 700893 / DSM 11879 / JCM 9820 / NBRC 100138 / K1).